The following is a 373-amino-acid chain: Glutamate 5-kinase (373 aa).

Residue Lys16 participates in ATP binding. Ser56, Asp143, and Asn155 together coordinate substrate. Residue 175–176 (TD) coordinates ATP. In terms of domain architecture, PUA spans 281–359 (RGVVTLDDGA…TKIETLLGYK (79 aa)).

The protein belongs to the glutamate 5-kinase family.

Its subcellular location is the cytoplasm. It carries out the reaction L-glutamate + ATP = L-glutamyl 5-phosphate + ADP. It participates in amino-acid biosynthesis; L-proline biosynthesis; L-glutamate 5-semialdehyde from L-glutamate: step 1/2. Its function is as follows. Catalyzes the transfer of a phosphate group to glutamate to form L-glutamate 5-phosphate. This chain is Glutamate 5-kinase, found in Teredinibacter turnerae (strain ATCC 39867 / T7901).